A 413-amino-acid polypeptide reads, in one-letter code: Hemolin (413 aa).

The first 18 residues, 1-18 (MVSKSIVALAACVAMCVA), serve as a signal peptide directing secretion. Ig-like C2-type domains are found at residues 25–112 (PVLK…HIIS), 121–215 (PTTF…LVGY), 233–322 (PMYV…VKLT), and 327–411 (PRFT…TLVI). Intrachain disulfides connect Cys46-Cys97, Cys141-Cys199, Cys252-Cys305, and Cys349-Cys395. Asn283 carries N-linked (GlcNAc...) asparagine glycosylation.

The protein belongs to the hemolin family. In terms of tissue distribution, hemolymph.

The protein resides in the secreted. Its function is as follows. Insect-immune protein with antimicrobial activity. Forms a protein complex at the bacterial surface. Can inhibit hemocyte aggregation. The protein is Hemolin of Manduca sexta (Tobacco hawkmoth).